The sequence spans 132 residues: Large-conductance mechanosensitive channel (132 aa).

Transmembrane regions (helical) follow at residues 14–34 (VIDL…VSSL) and 67–87 (GNFI…FMFV).

It belongs to the MscL family. In terms of assembly, homopentamer.

It localises to the cell membrane. Functionally, channel that opens in response to stretch forces in the membrane lipid bilayer. May participate in the regulation of osmotic pressure changes within the cell. The sequence is that of Large-conductance mechanosensitive channel from Bacillus anthracis (strain A0248).